The primary structure comprises 443 residues: 23S rRNA (uracil(1939)-C(5))-methyltransferase RlmD (443 aa).

One can recognise a TRAM domain in the interval 12-70 (SKQLSAKVSLQVTRLDHLGAGIAQHNGKVVFIPGVLPGEKAMVQLTEQKKRYSRAKLLN). Residues C83, C89, C92, and C171 each contribute to the [4Fe-4S] cluster site. Positions 277, 306, 311, 327, 354, and 374 each coordinate S-adenosyl-L-methionine. The active-site Nucleophile is C400.

This sequence belongs to the class I-like SAM-binding methyltransferase superfamily. RNA M5U methyltransferase family. RlmD subfamily.

It catalyses the reaction uridine(1939) in 23S rRNA + S-adenosyl-L-methionine = 5-methyluridine(1939) in 23S rRNA + S-adenosyl-L-homocysteine + H(+). Catalyzes the formation of 5-methyl-uridine at position 1939 (m5U1939) in 23S rRNA. This is 23S rRNA (uracil(1939)-C(5))-methyltransferase RlmD from Shewanella woodyi (strain ATCC 51908 / MS32).